Here is an 82-residue protein sequence, read N- to C-terminus: Cytochrome b559 subunit alpha (82 aa).

Residues 22–36 (VIHAITLPSIFLAGF) form a helical membrane-spanning segment. Histidine 24 provides a ligand contact to heme.

The protein belongs to the PsbE/PsbF family. In terms of assembly, heterodimer of an alpha subunit and a beta subunit. PSII is composed of 1 copy each of membrane proteins PsbA, PsbB, PsbC, PsbD, PsbE, PsbF, PsbH, PsbI, PsbJ, PsbK, PsbL, PsbM, PsbT, PsbX, PsbY, PsbZ, Psb30/Ycf12, peripheral proteins PsbO, CyanoQ (PsbQ), PsbU, PsbV and a large number of cofactors. It forms dimeric complexes. Heme b is required as a cofactor.

Its subcellular location is the cellular thylakoid membrane. In terms of biological role, this b-type cytochrome is tightly associated with the reaction center of photosystem II (PSII). PSII is a light-driven water:plastoquinone oxidoreductase that uses light energy to abstract electrons from H(2)O, generating O(2) and a proton gradient subsequently used for ATP formation. It consists of a core antenna complex that captures photons, and an electron transfer chain that converts photonic excitation into a charge separation. The protein is Cytochrome b559 subunit alpha of Synechococcus sp. (strain WH7803).